The primary structure comprises 1113 residues: Carbamoyl phosphate synthase arginine-specific large chain (1113 aa).

The carboxyphosphate synthetic domain stretch occupies residues 23–420 (QLIKGIDSVL…AFQKAFRQVD (398 aa)). R150, R190, G196, G197, K227, L229, E234, G260, I261, H262, Q303, and E317 together coordinate ATP. Positions 154-346 (ARALKEINMP…LAYTAAKIAL (193 aa)) constitute an ATP-grasp 1 domain. Residues Q303, E317, and N319 each contribute to the Mg(2+) site. The Mn(2+) site is built by Q303, E317, and N319. Residues 421-568 (PSLLGFQGSD…YVTYNAVKDD (148 aa)) form an oligomerization domain region. Residues 569 to 955 (VTFGDNGIMV…SYWVALQGLM (387 aa)) are carbamoyl phosphate synthetic domain. The ATP-grasp 2 domain maps to 693–888 (STILDTLGLD…FVEIAVKAFL (196 aa)). ATP contacts are provided by R729, K768, I770, E775, G800, V801, H802, S803, Q843, and E859. Mg(2+)-binding residues include Q843, E859, and N861. Residues Q843, E859, and N861 each contribute to the Mn(2+) site. An allosteric domain region spans residues 956–1097 (SFCVPLPPSG…EMRQSDGPET (142 aa)). Positions 957–1113 (FCVPLPPSGI…WREYLGFKPT (157 aa)) constitute an MGS-like domain.

The protein belongs to the CarB family. In terms of assembly, heterodimer composed of 2 chains; the small (or glutamine) chain promotes the hydrolysis of glutamine to ammonia, which is used by the large (or ammonia) chain to synthesize carbamoyl phosphate. Requires Mg(2+) as cofactor. Mn(2+) is required as a cofactor.

The protein localises to the cytoplasm. The enzyme catalyses hydrogencarbonate + L-glutamine + 2 ATP + H2O = carbamoyl phosphate + L-glutamate + 2 ADP + phosphate + 2 H(+). It catalyses the reaction hydrogencarbonate + NH4(+) + 2 ATP = carbamoyl phosphate + 2 ADP + phosphate + 2 H(+). Its pathway is amino-acid biosynthesis; L-arginine biosynthesis; carbamoyl phosphate from bicarbonate: step 1/1. Its function is as follows. Large subunit of the arginine-specific carbamoyl phosphate synthase (CPSase). CPSase catalyzes the formation of carbamoyl phosphate from the ammonia moiety of glutamine, hydrogencarbonate, and phosphate donated by ATP, constituting the first step of 2 biosynthetic pathways, one leading to arginine and/or urea and the other to pyrimidine nucleotides. The large subunit (synthetase) binds the substrates ammonia (free or transferred from glutamine from the small subunit), hydrogencarbonate and ATP and carries out an ATP-coupled ligase reaction, activating hydrogencarbonate by forming carboxy phosphate which reacts with ammonia to form carbamoyl phosphate. The protein is Carbamoyl phosphate synthase arginine-specific large chain (CPA2) of Eremothecium gossypii (strain ATCC 10895 / CBS 109.51 / FGSC 9923 / NRRL Y-1056) (Yeast).